The chain runs to 726 residues: Dipeptidyl-peptidase 5 (726 aa).

An N-terminal signal peptide occupies residues 1–19 (MAPAKWLIASLAFASTGLA). Residues asparagine 96 and asparagine 252 are each glycosylated (N-linked (GlcNAc...) asparagine). The tract at residues 268-292 (VAEPINKRNGPRTPHGIEGASSSPV) is disordered. A glycan (N-linked (GlcNAc...) asparagine) is linked at asparagine 485. Residue serine 558 is the Charge relay system of the active site. An N-linked (GlcNAc...) asparagine glycan is attached at asparagine 605. Catalysis depends on charge relay system residues aspartate 641 and histidine 673. Asparagine 699 carries N-linked (GlcNAc...) asparagine glycosylation.

This sequence belongs to the peptidase S9C family.

The protein resides in the secreted. Functionally, extracellular dipeptidyl-peptidase which removes N-terminal dipeptides sequentially from polypeptides having unsubstituted N-termini. Contributes to pathogenicity. The sequence is that of Dipeptidyl-peptidase 5 (DPP5) from Arthroderma otae (Microsporum canis).